Reading from the N-terminus, the 299-residue chain is Putative fructokinase (299 aa).

Position 130 (threonine 130) interacts with ATP. Zn(2+) contacts are provided by histidine 153, cysteine 168, histidine 171, and cysteine 174. Residues proline 182 and 230–234 (GVMQQ) each bind ATP.

It belongs to the ROK (NagC/XylR) family. Requires Mg(2+) as cofactor.

It carries out the reaction D-fructose + ATP = D-fructose 6-phosphate + ADP + H(+). With respect to regulation, inhibited by zinc ions. In terms of biological role, seems to be involved in the degradation of glucomannan. This chain is Putative fructokinase (gmuE), found in Bacillus subtilis (strain 168).